We begin with the raw amino-acid sequence, 38 residues long: Large ribosomal subunit protein bL36 (38 aa).

Belongs to the bacterial ribosomal protein bL36 family.

This chain is Large ribosomal subunit protein bL36, found in Lactobacillus johnsonii (strain CNCM I-12250 / La1 / NCC 533).